Reading from the N-terminus, the 381-residue chain is Na(+)/H(+) antiporter NhaA 1 (381 aa).

The next 11 membrane-spanning stretches (helical) occupy residues 18–38 (GLLLLFVTVISLWAANSSYSA), 53–73 (ITHWINDGLMTIFFLLIGLEL), 89–109 (SLPIMAAFGGMLIPAATFLAL), 118–138 (GAGIPMATDIAFAIGILSLLG), 147–167 (VFLTALAVIDDLGAIIVIAVF), 170–190 (TSIGFVNLAIALGIWVFLFVL), 210–230 (YFMLNSGIHATITGVILAFVI), 251–271 (PVAFFILPLFAIANTCIAIES), 283–303 (FGIILGLVIGKPLGILLFSSI), 321–341 (ILGAGMLGGIGFTMSIFITLL), and 348–368 (IIVFSKIAIIIASIISGITGF).

The protein belongs to the NhaA Na(+)/H(+) (TC 2.A.33) antiporter family.

It is found in the cell inner membrane. The enzyme catalyses Na(+)(in) + 2 H(+)(out) = Na(+)(out) + 2 H(+)(in). In terms of biological role, na(+)/H(+) antiporter that extrudes sodium in exchange for external protons. This chain is Na(+)/H(+) antiporter NhaA 1, found in Flavobacterium johnsoniae (strain ATCC 17061 / DSM 2064 / JCM 8514 / BCRC 14874 / CCUG 350202 / NBRC 14942 / NCIMB 11054 / UW101) (Cytophaga johnsonae).